A 491-amino-acid polypeptide reads, in one-letter code: Cysteine--tRNA ligase (491 aa).

Cysteine 29 is a Zn(2+) binding site. Residues 31–41 (PTVYDFAHIGN) carry the 'HIGH' region motif. Positions 227, 252, and 256 each coordinate Zn(2+). The 'KMSKS' region signature appears at 285 to 289 (KMSKS). An ATP-binding site is contributed by lysine 288.

Belongs to the class-I aminoacyl-tRNA synthetase family. Monomer. Zn(2+) is required as a cofactor.

Its subcellular location is the cytoplasm. It catalyses the reaction tRNA(Cys) + L-cysteine + ATP = L-cysteinyl-tRNA(Cys) + AMP + diphosphate. In Rhodopseudomonas palustris (strain TIE-1), this protein is Cysteine--tRNA ligase.